A 150-amino-acid chain; its full sequence is Anthrone oxygenase gedH (150 aa).

Transmembrane regions (helical) follow at residues 1 to 21 (MANP…PVFL), 41 to 61 (GHKL…WVAA), 73 to 93 (PVLA…CMVS), and 128 to 148 (LFPL…LVGG).

The protein belongs to the anthrone oxygenase family.

The protein localises to the membrane. It catalyses the reaction emodin anthrone + O2 = emodin + H2O + H(+). Its pathway is secondary metabolite biosynthesis. In terms of biological role, anthrone oxygenase; part of the gene cluster that mediates the biosynthesis of geodin, an intermediate in the biosynthesis of other natural products. The pathway begins with the synthesis of atrochrysone thioester by the polyketide synthase (PKS) gedC. The atrochrysone carboxyl ACP thioesterase gedB then breaks the thioester bond and releases the atrochrysone carboxylic acid from gedC. The atrochrysone carboxylic acid is then converted to atrochrysone which is further transformed into emodin anthrone. The next step is performed by the emodin anthrone oxygenase gedH that catalyzes the oxidation of emodinanthrone to emodin. Emodin O-methyltransferase encoded probably by gedA then catalyzes methylation of the 8-hydroxy group of emodin to form questin. Ring cleavage of questin by questin oxidase gedK leads to desmethylsulochrin via several intermediates including questin epoxide. Another methylation step probably catalyzed by methyltransferase gedG leads to the formation of sulochrin which is further converted to dihydrogeodin by the sulochrin halogenase gedL. Finally, the dihydrogeodin oxidase gedJ catalyzes the stereospecific phenol oxidative coupling reaction converting dihydrogeodin to geodin. In Aspergillus terreus (strain NIH 2624 / FGSC A1156), this protein is Anthrone oxygenase gedH.